The sequence spans 63 residues: MANPKAKMSKSRRDKRRAQFNARTKAAVTVVCPNCGEPTLPHRACRHCGHYKGRQVTGKSVVA.

Residues 1 to 20 form a disordered region; the sequence is MANPKAKMSKSRRDKRRAQF. Basic residues predominate over residues 7-18; it reads KMSKSRRDKRRA.

Belongs to the bacterial ribosomal protein bL32 family.

The chain is Large ribosomal subunit protein bL32 from Chlorobaculum tepidum (strain ATCC 49652 / DSM 12025 / NBRC 103806 / TLS) (Chlorobium tepidum).